Reading from the N-terminus, the 310-residue chain is Homoserine kinase (310 aa).

Residue 91–101 (PLARGLGSSAA) coordinates ATP.

It belongs to the GHMP kinase family. Homoserine kinase subfamily.

It is found in the cytoplasm. The catalysed reaction is L-homoserine + ATP = O-phospho-L-homoserine + ADP + H(+). It functions in the pathway amino-acid biosynthesis; L-threonine biosynthesis; L-threonine from L-aspartate: step 4/5. In terms of biological role, catalyzes the ATP-dependent phosphorylation of L-homoserine to L-homoserine phosphate. The chain is Homoserine kinase from Bacillus pumilus (strain SAFR-032).